The following is a 296-amino-acid chain: Acetaldehyde dehydrogenase (296 aa).

Position 15 to 18 (15 to 18 (SGNI)) interacts with NAD(+). C132 functions as the Acyl-thioester intermediate in the catalytic mechanism. Residues 164–172 (SAGPATRAN) and N274 each bind NAD(+).

It belongs to the acetaldehyde dehydrogenase family. Interacts with MhpE.

The catalysed reaction is acetaldehyde + NAD(+) + CoA = acetyl-CoA + NADH + H(+). Its pathway is aromatic compound metabolism; 3-phenylpropanoate degradation. Functionally, catalyzes the conversion of acetaldehyde to acetyl-CoA, using NAD(+) and coenzyme A. Is the final enzyme in the meta-cleavage pathway for the degradation of aromatic compounds. The polypeptide is Acetaldehyde dehydrogenase (Pectobacterium atrosepticum (strain SCRI 1043 / ATCC BAA-672) (Erwinia carotovora subsp. atroseptica)).